Here is a 356-residue protein sequence, read N- to C-terminus: Histidinol-phosphate aminotransferase (356 aa).

An N6-(pyridoxal phosphate)lysine modification is found at Lys208.

The protein belongs to the class-II pyridoxal-phosphate-dependent aminotransferase family. Histidinol-phosphate aminotransferase subfamily. Homodimer. Requires pyridoxal 5'-phosphate as cofactor.

The catalysed reaction is L-histidinol phosphate + 2-oxoglutarate = 3-(imidazol-4-yl)-2-oxopropyl phosphate + L-glutamate. It participates in amino-acid biosynthesis; L-histidine biosynthesis; L-histidine from 5-phospho-alpha-D-ribose 1-diphosphate: step 7/9. The polypeptide is Histidinol-phosphate aminotransferase (Lactococcus lactis subsp. cremoris (strain SK11)).